Here is a 206-residue protein sequence, read N- to C-terminus: Ribosomal RNA small subunit methyltransferase G (206 aa).

S-adenosyl-L-methionine is bound by residues G74, L79, 125–126 (VE), and R140.

The protein belongs to the methyltransferase superfamily. RNA methyltransferase RsmG family.

Its subcellular location is the cytoplasm. The enzyme catalyses guanosine(527) in 16S rRNA + S-adenosyl-L-methionine = N(7)-methylguanosine(527) in 16S rRNA + S-adenosyl-L-homocysteine. Functionally, specifically methylates the N7 position of guanine in position 527 of 16S rRNA. The sequence is that of Ribosomal RNA small subunit methyltransferase G from Shewanella oneidensis (strain ATCC 700550 / JCM 31522 / CIP 106686 / LMG 19005 / NCIMB 14063 / MR-1).